The following is a 386-amino-acid chain: MEKIKDQFANLHILRRSSEPKEPTYLLGIDTSKTVPAEKGGLVAVLCSNGSIRIYDKETLNLLREFSGSPGLLNGVRFANSCDNVYSASTDGTVKCWDARLASEKPAQLFKGYPSNIFISFDVNCKDHIICAGAEKVEDDALLVFWDARFTSQDLSTRDPLGAYSETHSDDITQVRFHPSNPNMVVSGSTDGLVNVFDLSVDNEEDALVATCNSVSSVSCIGWCGRDYKQIYCMTHDEGFCWWDLNHLDTDEPITCLNIQDVRDVTDVKEGHLDYLIGGLYHENMDRLFVIGGTNLGKIHLLSCTKTGLSHVTSLQGGHAATVRSFCWTVSEDSLLTGGEDAQLLLWKPGAVEKTFTKKDSLKIASSVQQRVRVHSSDSYKKRKQQ.

WD repeat units follow at residues 21–65 (KEPT…LLRE), 68–107 (GSPG…EKPA), 112–156 (GYPS…QDLS), 167–207 (THSD…EEDA), 213–253 (NSVS…TDEP), and 318–357 (GHAA…KTFT).

The chain is WD repeat-containing protein 89 (Wdr89) from Rattus norvegicus (Rat).